Consider the following 248-residue polypeptide: Ubiquinone biosynthesis O-methyltransferase (248 aa).

S-adenosyl-L-methionine is bound by residues Arg40, Gly71, Asp92, and Met135.

The protein belongs to the methyltransferase superfamily. UbiG/COQ3 family.

The enzyme catalyses a 3-demethylubiquinol + S-adenosyl-L-methionine = a ubiquinol + S-adenosyl-L-homocysteine + H(+). It carries out the reaction a 3-(all-trans-polyprenyl)benzene-1,2-diol + S-adenosyl-L-methionine = a 2-methoxy-6-(all-trans-polyprenyl)phenol + S-adenosyl-L-homocysteine + H(+). It participates in cofactor biosynthesis; ubiquinone biosynthesis. O-methyltransferase that catalyzes the 2 O-methylation steps in the ubiquinone biosynthetic pathway. This is Ubiquinone biosynthesis O-methyltransferase from Ruegeria pomeroyi (strain ATCC 700808 / DSM 15171 / DSS-3) (Silicibacter pomeroyi).